Here is a 296-residue protein sequence, read N- to C-terminus: Haloalkane dehalogenase (296 aa).

Residues 31–155 enclose the AB hydrolase-1 domain; it reads PILFQHGNPT…QDRDLFQAFR (125 aa). The active-site Nucleophile is the aspartate 108. The active-site Proton donor is glutamate 132. Residue histidine 272 is the Proton acceptor of the active site.

This sequence belongs to the haloalkane dehalogenase family. Type 2 subfamily. Monomer.

The protein resides in the periplasm. The catalysed reaction is 1-haloalkane + H2O = a halide anion + a primary alcohol + H(+). It catalyses the reaction (3R,6R)-1,3,4,6-tetrachlorocyclohexa-1,4-diene + 2 H2O = 2,5-dichlorocyclohexa-2,5-dien-1,4-diol + 2 chloride + 2 H(+). The protein operates within xenobiotic degradation; gamma-hexachlorocyclohexane degradation. In terms of biological role, catalyzes hydrolytic cleavage of carbon-halogen bonds in halogenated aliphatic compounds, leading to the formation of the corresponding primary alcohols, halide ions and protons. Is involved in the degradation of the important environmental pollutant gamma-hexachlorocyclohexane (gamma-HCH or lindane) as it also catalyzes conversion of 1,3,4,6-tetrachloro-1,4-cyclohexadiene (1,4-TCDN) to 2,5-dichloro-2,5-cyclohexadiene-1,4-diol (2,5-DDOL) via the intermediate 2,4,5-trichloro-2,5-cyclohexadiene-1-ol (2,4,5-DNOL). The sequence is that of Haloalkane dehalogenase from Sphingobium indicum (strain DSM 16412 / CCM 7286 / MTCC 6364 / B90A).